Consider the following 187-residue polypeptide: GTP cyclohydrolase 1 (187 aa).

Zn(2+)-binding residues include Cys-76, His-79, and Cys-148.

It belongs to the GTP cyclohydrolase I family. As to quaternary structure, homomer.

The catalysed reaction is GTP + H2O = 7,8-dihydroneopterin 3'-triphosphate + formate + H(+). It participates in cofactor biosynthesis; 7,8-dihydroneopterin triphosphate biosynthesis; 7,8-dihydroneopterin triphosphate from GTP: step 1/1. The polypeptide is GTP cyclohydrolase 1 (Streptococcus gordonii (strain Challis / ATCC 35105 / BCRC 15272 / CH1 / DL1 / V288)).